The sequence spans 330 residues: MQNLGIAITGSGSAAPETSLHNEELSQLVETSDEWISTRTGIRQRRLALPTESLSSLAAAASRQAIASAGITASDIDLILLATSTPDDLFGTATKIQAELGATKAVAFDLTAACSGFVFGLVTAAQFIRTGVYQNVLLIGADILSRWVDWQDRRTCVLFGDGAGAIVLQSNQSDRLLGFALKSDGTQNHYLNLAYQGTAQEILPNIKITQGTYQPVTMNGKEVYRFAAQKVPEIIDKALFEANITVDQIDWLLLHQANQRILDTVAQRLNIPAHKVISNLANYGNTSAASIPLALDEAVREGKIKPNDIIATSGFGAGLTWGAAIFQWGR.

Catalysis depends on residues C114 and H255. An ACP-binding region spans residues 256-260 (QANQR). N285 is a catalytic residue.

This sequence belongs to the thiolase-like superfamily. FabH family. In terms of assembly, homodimer.

It is found in the cytoplasm. It carries out the reaction malonyl-[ACP] + acetyl-CoA + H(+) = 3-oxobutanoyl-[ACP] + CO2 + CoA. It participates in lipid metabolism; fatty acid biosynthesis. Functionally, catalyzes the condensation reaction of fatty acid synthesis by the addition to an acyl acceptor of two carbons from malonyl-ACP. Catalyzes the first condensation reaction which initiates fatty acid synthesis and may therefore play a role in governing the total rate of fatty acid production. Possesses both acetoacetyl-ACP synthase and acetyl transacylase activities. Its substrate specificity determines the biosynthesis of branched-chain and/or straight-chain of fatty acids. The chain is Beta-ketoacyl-[acyl-carrier-protein] synthase III from Trichormus variabilis (strain ATCC 29413 / PCC 7937) (Anabaena variabilis).